Consider the following 554-residue polypeptide: Glucose-6-phosphate isomerase (554 aa).

Residue glutamate 358 is the Proton donor of the active site. Active-site residues include histidine 389 and lysine 515. Polar residues predominate over residues 527–540 (ANNSPAPQSDSSTD). Positions 527–554 (ANNSPAPQSDSSTDALVRRYRSERGRTS) are disordered. Residues 542-554 (LVRRYRSERGRTS) are compositionally biased toward basic and acidic residues.

Belongs to the GPI family.

The protein localises to the cytoplasm. It carries out the reaction alpha-D-glucose 6-phosphate = beta-D-fructose 6-phosphate. The protein operates within carbohydrate biosynthesis; gluconeogenesis. It participates in carbohydrate degradation; glycolysis; D-glyceraldehyde 3-phosphate and glycerone phosphate from D-glucose: step 2/4. In terms of biological role, catalyzes the reversible isomerization of glucose-6-phosphate to fructose-6-phosphate. The protein is Glucose-6-phosphate isomerase of Mycolicibacterium paratuberculosis (strain ATCC BAA-968 / K-10) (Mycobacterium paratuberculosis).